The chain runs to 805 residues: Acetyl-CoA decarbonylase/synthase complex subunit alpha 3 (805 aa).

[4Fe-4S] cluster-binding residues include Cys72, Cys75, Cys76, Cys78, Cys83, and Cys93. His116 is a binding site for CO. [Ni-4Fe-4S] cluster contacts are provided by His249, Cys277, and Cys322. 4Fe-4S ferredoxin-type domains are found at residues 407 to 435 and 445 to 474; these read EEFK…IPEA and EYLE…LNVL. [4Fe-4S] cluster is bound by residues Cys416, Cys419, Cys422, Cys426, Cys454, Cys457, Cys460, and Cys464. Positions 522, 551, and 586 each coordinate [Ni-4Fe-4S] cluster.

Belongs to the Ni-containing carbon monoxide dehydrogenase family. As to quaternary structure, heterotetramer of two alpha and two epsilon subunits. The ACDS complex is made up of alpha, epsilon, beta, gamma and delta subunits with a probable stoichiometry of (alpha(2)epsilon(2))(4)-beta(8)-(gamma(1)delta(1))(8). Requires [4Fe-4S] cluster as cofactor. The cofactor is [Ni-4Fe-4S] cluster.

The enzyme catalyses CO + 2 oxidized [2Fe-2S]-[ferredoxin] + H2O = 2 reduced [2Fe-2S]-[ferredoxin] + CO2 + 2 H(+). It participates in one-carbon metabolism; methanogenesis from acetate. In terms of biological role, part of the ACDS complex that catalyzes the reversible cleavage of acetyl-CoA, allowing growth on acetate as sole source of carbon and energy. The alpha-epsilon subcomponent functions as a carbon monoxide dehydrogenase. The chain is Acetyl-CoA decarbonylase/synthase complex subunit alpha 3 from Methanosarcina acetivorans (strain ATCC 35395 / DSM 2834 / JCM 12185 / C2A).